The following is a 243-amino-acid chain: Segregation and condensation protein A (243 aa).

The protein belongs to the ScpA family. Component of a cohesin-like complex composed of ScpA, ScpB and the Smc homodimer, in which ScpA and ScpB bind to the head domain of Smc. The presence of the three proteins is required for the association of the complex with DNA.

Its subcellular location is the cytoplasm. Its function is as follows. Participates in chromosomal partition during cell division. May act via the formation of a condensin-like complex containing Smc and ScpB that pull DNA away from mid-cell into both cell halves. This is Segregation and condensation protein A from Staphylococcus haemolyticus (strain JCSC1435).